The sequence spans 393 residues: NAD(P)H-quinone oxidoreductase subunit H, chloroplastic (393 aa).

It belongs to the complex I 49 kDa subunit family. As to quaternary structure, NDH is composed of at least 16 different subunits, 5 of which are encoded in the nucleus.

The protein resides in the plastid. Its subcellular location is the chloroplast thylakoid membrane. It catalyses the reaction a plastoquinone + NADH + (n+1) H(+)(in) = a plastoquinol + NAD(+) + n H(+)(out). It carries out the reaction a plastoquinone + NADPH + (n+1) H(+)(in) = a plastoquinol + NADP(+) + n H(+)(out). In terms of biological role, NDH shuttles electrons from NAD(P)H:plastoquinone, via FMN and iron-sulfur (Fe-S) centers, to quinones in the photosynthetic chain and possibly in a chloroplast respiratory chain. The immediate electron acceptor for the enzyme in this species is believed to be plastoquinone. Couples the redox reaction to proton translocation, and thus conserves the redox energy in a proton gradient. The protein is NAD(P)H-quinone oxidoreductase subunit H, chloroplastic of Calycanthus floridus var. glaucus (Eastern sweetshrub).